Consider the following 524-residue polypeptide: 3-epi-6-deoxocathasterone 23-monooxygenase CYP90C1 (524 aa).

Residues 25 to 45 (YLVAGFLVLTAGILLRPWLWL) traverse the membrane as a helical segment. Cys-463 contributes to the heme binding site.

Belongs to the cytochrome P450 family. Requires heme as cofactor. As to expression, widely expressed.

It localises to the endoplasmic reticulum membrane. The enzyme catalyses 3-epi-6-deoxocathasterone + reduced [NADPH--hemoprotein reductase] + O2 = 6-deoxotyphasterol + oxidized [NADPH--hemoprotein reductase] + H2O + H(+). The catalysed reaction is (22S,24R)-22-hydroxy-5alpha-ergostan-3-one + reduced [NADPH--hemoprotein reductase] + O2 = 3-dehydro-6-deoxoteasterone + oxidized [NADPH--hemoprotein reductase] + H2O + H(+). The protein operates within plant hormone biosynthesis; brassinosteroid biosynthesis. Functionally, involved in brassinosteroid (BR) biosynthesis. Converts typhasterol (TY) to cathasterone (CS) and 6-deoxotyphasterol (6-deoxoTY) to 6-deoxocathasterone (6-deoxoCT). C-23 hydroxylase that converts directly (22S,24R)-22-hydroxy-5-alpha-ergostan-3-one and 3-epi-6-deoxocathasterone to 3-dehydro-6-deoxoteasterone (6-deoxo3DT, 6-deoxo3DHT) and 6-deoxotyphasterol (6-deoxoTY), respectively. These C-23 hydroxylation shortcuts bypass campestanol, 6-deoxocathasterone, and 6-deoxoteasterone (6-deoxoTE). Also catalyzes the conversion of cathasterone to teasterone (TE), (22S,24R)-22-hydroxyergost-4-en-3-one (22-OH-4-en-3-one) to (22R,23R)-22,23-dihydroxy-campest-4-en-3-one (22,23-diOH-4-en-3-one) and (22S)-22-hydroxycampesterol (22-OHCR) to (22R,23R)-22,23-dihydroxycampesterol (22,23-diOHCR). Required for the regulation of polar elongation of leaf cells. Required for the longitudinal elongation of floral organs. The polypeptide is 3-epi-6-deoxocathasterone 23-monooxygenase CYP90C1 (Arabidopsis thaliana (Mouse-ear cress)).